Here is a 675-residue protein sequence, read N- to C-terminus: MTPVEAQSRIAELRAQVARHDELYHRRAQPQIGDFEYDALKRELAELEAAWPQFARGASPTEQVGDDRTEGFQVYRHRERMMSLDNTYSETELREFHDRLVRELERDGLKFVIEPKIDGLAVSITYEKGKLVRAVTRGNGIEGDDITTNALTIKSLPRELKRADGVPLPAVIEIRGEVFLTTEEFLRINRQREEAGEPLYANPRNLAAGTIKQLDPREVAQRKLEVVLYGRGYVEPASALPETQAQFHGWVKAWGLPTVERFWTATGADEIWAAVQELDALRDTFAYATDGAVVKLDAVPLQRRAGSTSKSPRWAMAYKFAPDRAETQLRAITVQVGRTGVLTPVAELDPVQLAGTTVSRATLHNRDEIARKDIRVGDFVYVEKAGEIIPAVIGVNPARRAPECVPYVFPEKCPECGTAVVQLEGEVAVRCPNFSCPVQVRRRVQHFASKACVDIEGMGEAMVDVLVEKGWVHSVPDIYQLKRENLLTLGKSVEKSTDKLLEAIEASKRAELWRFIHGLGIPHAGAAAAKDLARTFGGLERLASARYEDFIREKASVIGGIGETMALAILAYFAEPRNRAVVDELVRVGVQPVVPNSGSALAGKTFVLTGTLPTLTRDEATAQIEAAGGKVSSGVSKKTSYVLAGEEAGSKLEKARALAVPVIDEAEFLRLLSGG.

NAD(+) is bound by residues 34–38, 83–84, and Glu-114; these read DFEYD and SL. Residue Lys-116 is the N6-AMP-lysine intermediate of the active site. The NAD(+) site is built by Arg-137, Glu-177, Lys-295, and Lys-319. Residues Cys-413, Cys-416, Cys-431, and Cys-436 each contribute to the Zn(2+) site. The 80-residue stretch at 596–675 folds into the BRCT domain; that stretch reads NSGSALAGKT…AEFLRLLSGG (80 aa).

This sequence belongs to the NAD-dependent DNA ligase family. LigA subfamily. Requires Mg(2+) as cofactor. Mn(2+) is required as a cofactor.

It carries out the reaction NAD(+) + (deoxyribonucleotide)n-3'-hydroxyl + 5'-phospho-(deoxyribonucleotide)m = (deoxyribonucleotide)n+m + AMP + beta-nicotinamide D-nucleotide.. In terms of biological role, DNA ligase that catalyzes the formation of phosphodiester linkages between 5'-phosphoryl and 3'-hydroxyl groups in double-stranded DNA using NAD as a coenzyme and as the energy source for the reaction. It is essential for DNA replication and repair of damaged DNA. The protein is DNA ligase 1 of Opitutus terrae (strain DSM 11246 / JCM 15787 / PB90-1).